Consider the following 501-residue polypeptide: Endoglucanase 8 (501 aa).

A signal peptide spans 1–35; it reads MKPRSSRDGHNAAAAAALLLAALVLSGDVLPAVVA. Asp95 acts as the Nucleophile in catalysis. N-linked (GlcNAc...) asparagine glycosylation occurs at Asn298. Residue His414 is part of the active site. A glycan (N-linked (GlcNAc...) asparagine) is linked at Asn462. Asp465 is an active-site residue. N-linked (GlcNAc...) asparagine glycosylation is present at Asn469. Glu474 is an active-site residue.

Belongs to the glycosyl hydrolase 9 (cellulase E) family.

It localises to the secreted. It catalyses the reaction Endohydrolysis of (1-&gt;4)-beta-D-glucosidic linkages in cellulose, lichenin and cereal beta-D-glucans.. This Oryza sativa subsp. japonica (Rice) protein is Endoglucanase 8.